The chain runs to 64 residues: Prokaryotic ubiquitin-like protein Pup (64 aa).

Residues 1–37 are disordered; the sequence is MAQEQTQRAGGGEDDETTGGDGSAGQERREKLAAETD. Residues 21–58 form an ARC ATPase binding region; it reads DGSAGQERREKLAAETDDLLDEIDDVLEENAEDFVRAY. A coiled-coil region spans residues 24–52; that stretch reads AGQERREKLAAETDDLLDEIDDVLEENAE. Glutamine 64 is subject to Deamidated glutamine. Glutamine 64 participates in a covalent cross-link: Isoglutamyl lysine isopeptide (Gln-Lys) (interchain with K-? in acceptor proteins).

It belongs to the prokaryotic ubiquitin-like protein family. Strongly interacts with the proteasome-associated ATPase ARC through a hydrophobic interface; the interacting region of Pup lies in its C-terminal half. There is one Pup binding site per ARC hexamer ring. Post-translationally, is modified by deamidation of its C-terminal glutamine to glutamate by the deamidase Dop, a prerequisite to the subsequent pupylation process.

It participates in protein degradation; proteasomal Pup-dependent pathway. Functionally, protein modifier that is covalently attached to lysine residues of substrate proteins, thereby targeting them for proteasomal degradation. The tagging system is termed pupylation. The polypeptide is Prokaryotic ubiquitin-like protein Pup (Rhodococcus erythropolis (strain PR4 / NBRC 100887)).